Here is a 462-residue protein sequence, read N- to C-terminus: tRNA-2-methylthio-N(6)-dimethylallyladenosine synthase (462 aa).

The region spanning 2–117 is the MTTase N-terminal domain; sequence KRYFIHTFGC…LPDIIGRVSA (116 aa). Residues C11, C47, C80, C157, C161, and C164 each contribute to the [4Fe-4S] cluster site. The 230-residue stretch at 143 to 372 folds into the Radical SAM core domain; that stretch reads SRGKVTEFVT…QKLQRRISGE (230 aa). A TRAM domain is found at 375-437; it reads AALVGSEVEV…PNQLAGKQVA (63 aa).

The protein belongs to the methylthiotransferase family. MiaB subfamily. Monomer. It depends on [4Fe-4S] cluster as a cofactor.

It is found in the cytoplasm. The catalysed reaction is N(6)-dimethylallyladenosine(37) in tRNA + (sulfur carrier)-SH + AH2 + 2 S-adenosyl-L-methionine = 2-methylsulfanyl-N(6)-dimethylallyladenosine(37) in tRNA + (sulfur carrier)-H + 5'-deoxyadenosine + L-methionine + A + S-adenosyl-L-homocysteine + 2 H(+). In terms of biological role, catalyzes the methylthiolation of N6-(dimethylallyl)adenosine (i(6)A), leading to the formation of 2-methylthio-N6-(dimethylallyl)adenosine (ms(2)i(6)A) at position 37 in tRNAs that read codons beginning with uridine. This chain is tRNA-2-methylthio-N(6)-dimethylallyladenosine synthase, found in Myxococcus xanthus (strain DK1622).